We begin with the raw amino-acid sequence, 276 residues long: Transcriptional antiactivator ExsD (276 aa).

In terms of assembly, can form homotrimer. Interacts with ExsA; this interaction inhibits ExsA activity. Interacts with ExsC; this interaction dissociates the ExsD-ExsA complex.

Functionally, negative regulator of the type III secretion system regulon. Acts by disrupting transcriptional activator ExsA self-association and DNA-binding activity in absence of inducing signals. Upon host cell contact, this interaction is disrupted by the anti-antiactivator protein ExsC leading to ExsA activation. This is Transcriptional antiactivator ExsD (exsD) from Pseudomonas aeruginosa (strain ATCC 15692 / DSM 22644 / CIP 104116 / JCM 14847 / LMG 12228 / 1C / PRS 101 / PAO1).